Here is a 359-residue protein sequence, read N- to C-terminus: Homeotic protein knotted-1 (359 aa).

Disordered regions lie at residues 1 to 34 (MEEITQHFGVGASSHGHGHGQHHHHHHHHHPWAS) and 213 to 232 (LSSGSSEEDQEGSGGETELP). Over residues 16-31 (GHGHGQHHHHHHHHHP) the composition is skewed to basic residues. Positions 242–262 (ELKHHLLKKYSGYLSSLKQEL) constitute an ELK domain. Residues 263–326 (SKKKKKGKLP…NQRKRHWKPS (64 aa)) constitute a DNA-binding region (homeobox; TALE-type).

Belongs to the TALE/KNOX homeobox family. In terms of assembly, forms homodimers. Binds to MBP2C; this interaction reduces RNA binding capacity. As to expression, expressed in apical meristems of vegetative and floral stems as well as in the underlying ground meristem. Specifically expressed in vascular bundles developing both in the leaf and stem. Very low levels of expression in leaves.

The protein resides in the nucleus. The protein localises to the cell junction. It is found in the plasmodesma. It localises to the cytoplasm. Binds to RNA. Possible transcription factor that regulates genes involved in development. Mutations in KN-1 alter leaf development. Foci of cells along the lateral vein do not differentiate properly but continue to divide, forming knots. May participate in the switch from indeterminate to determinate cell fates. Probably binds to the DNA sequence 5'-TGAC-3'. This chain is Homeotic protein knotted-1 (KN-1), found in Zea mays (Maize).